A 243-amino-acid polypeptide reads, in one-letter code: PF03932 family protein CutC (243 aa).

Belongs to the CutC family.

The protein resides in the cytoplasm. The protein is PF03932 family protein CutC of Parabacteroides distasonis (strain ATCC 8503 / DSM 20701 / CIP 104284 / JCM 5825 / NCTC 11152).